The primary structure comprises 135 residues: Ribonuclease VapC9 (135 aa).

The 104-residue stretch at 15–118 (VVDTNVLMYV…LKRKAKQRGI (104 aa)) folds into the PINc domain. Mg(2+)-binding residues include Asp17 and Asp88.

The protein belongs to the PINc/VapC protein family. Dimer. It depends on Mg(2+) as a cofactor.

In terms of biological role, toxic component of a type II toxin-antitoxin (TA) system. An RNase. This is Ribonuclease VapC9 from Archaeoglobus fulgidus (strain ATCC 49558 / DSM 4304 / JCM 9628 / NBRC 100126 / VC-16).